We begin with the raw amino-acid sequence, 440 residues long: Transposon Ty1-GR1 Gag polyprotein (440 aa).

Residues 1–16 (MESQQLSQHSHISHGS) show a composition bias toward low complexity. 3 disordered regions span residues 1-93 (MESQ…MMTQ), 126-173 (PQSQ…RPPP), and 352-440 (GSRN…PGTY). Polar residues-rich tracts occupy residues 48-60 (TKANSQQTTTPAS), 71-93 (SPQTAQSHSPQNGPYPQQCMMTQ), and 127-152 (QSQFPQYPSSVGTPLSTPSPESGNTF). Over residues 153-165 (TDSSSADSDMTST) the composition is skewed to low complexity. The segment at 299-401 (NNGIHINNKV…NSKSKTARAH (103 aa)) is RNA-binding. The segment covering 402–418 (NVSTSNNSPSTDNDSIS) has biased composition (low complexity). Phosphoserine is present on Ser416. Residues 419-428 (KSTTEPIQLN) show a composition bias toward polar residues. The segment covering 429-440 (NKHDLHLRPGTY) has biased composition (basic and acidic residues).

As to quaternary structure, homotrimer.

The protein resides in the cytoplasm. Functionally, capsid protein (CA) is the structural component of the virus-like particle (VLP), forming the shell that encapsulates the retrotransposons dimeric RNA genome. The particles are assembled from trimer-clustered units and there are holes in the capsid shells that allow for the diffusion of macromolecules. CA also has nucleocapsid-like chaperone activity, promoting primer tRNA(i)-Met annealing to the multipartite primer-binding site (PBS), dimerization of Ty1 RNA and initiation of reverse transcription. The protein is Transposon Ty1-GR1 Gag polyprotein (TY1A-GR1) of Saccharomyces cerevisiae (strain ATCC 204508 / S288c) (Baker's yeast).